Consider the following 456-residue polypeptide: Bifunctional protein GlmU (456 aa).

The tract at residues 1–229 (MLNNAMSVVI…LSEVEGVNNR (229 aa)) is pyrophosphorylase. UDP-N-acetyl-alpha-D-glucosamine is bound by residues 11 to 14 (LAAG), K25, Q76, 81 to 82 (GT), 103 to 105 (YGD), G140, E154, N169, and N227. D105 contributes to the Mg(2+) binding site. N227 provides a ligand contact to Mg(2+). The tract at residues 230 to 250 (LQLSRLERVYQSEQAEKLLLA) is linker. An N-acetyltransferase region spans residues 251 to 456 (GVMLRDPARF…EGWRRPVKKK (206 aa)). R333 and K351 together coordinate UDP-N-acetyl-alpha-D-glucosamine. H363 functions as the Proton acceptor in the catalytic mechanism. The UDP-N-acetyl-alpha-D-glucosamine site is built by Y366 and N377. Acetyl-CoA is bound by residues A380, 386–387 (NY), S405, A423, and R440.

The protein in the N-terminal section; belongs to the N-acetylglucosamine-1-phosphate uridyltransferase family. In the C-terminal section; belongs to the transferase hexapeptide repeat family. Homotrimer. It depends on Mg(2+) as a cofactor.

It localises to the cytoplasm. The enzyme catalyses alpha-D-glucosamine 1-phosphate + acetyl-CoA = N-acetyl-alpha-D-glucosamine 1-phosphate + CoA + H(+). The catalysed reaction is N-acetyl-alpha-D-glucosamine 1-phosphate + UTP + H(+) = UDP-N-acetyl-alpha-D-glucosamine + diphosphate. It functions in the pathway nucleotide-sugar biosynthesis; UDP-N-acetyl-alpha-D-glucosamine biosynthesis; N-acetyl-alpha-D-glucosamine 1-phosphate from alpha-D-glucosamine 6-phosphate (route II): step 2/2. Its pathway is nucleotide-sugar biosynthesis; UDP-N-acetyl-alpha-D-glucosamine biosynthesis; UDP-N-acetyl-alpha-D-glucosamine from N-acetyl-alpha-D-glucosamine 1-phosphate: step 1/1. The protein operates within bacterial outer membrane biogenesis; LPS lipid A biosynthesis. Functionally, catalyzes the last two sequential reactions in the de novo biosynthetic pathway for UDP-N-acetylglucosamine (UDP-GlcNAc). The C-terminal domain catalyzes the transfer of acetyl group from acetyl coenzyme A to glucosamine-1-phosphate (GlcN-1-P) to produce N-acetylglucosamine-1-phosphate (GlcNAc-1-P), which is converted into UDP-GlcNAc by the transfer of uridine 5-monophosphate (from uridine 5-triphosphate), a reaction catalyzed by the N-terminal domain. The chain is Bifunctional protein GlmU from Escherichia coli O157:H7 (strain EC4115 / EHEC).